Here is a 105-residue protein sequence, read N- to C-terminus: DNA-binding transcriptional regulator BolA (105 aa).

This sequence belongs to the BolA/IbaG family.

Its function is as follows. Transcriptional regulator that plays an important role in general stress response. Has many effects on cell morphology, cell growth and cell division. Acts by regulating the transcription of many genes, including dacA (PBP-5), dacC (PBP-6), ampC and mreB. Probably involved in the coordination of genes that adapt the cell physiology in order to enhance cell adaptation and survival under stress conditions. Essential for normal cell morphology in stationary phase and under conditions of starvation. Also regulates a complex network of genes encoding proteins related to biofilm development, and negatively modulates flagellar biosynthesis and swimming capacity. Could be a motile/adhesive transcriptional switch, specifically involved in the transition between the planktonic and the attachment stage of biofilm formation. Overexpression produces round cell shape, impairs cell growth rate and induces biofilm development. The polypeptide is DNA-binding transcriptional regulator BolA (Escherichia coli (strain K12)).